Consider the following 245-residue polypeptide: Biosynthetic peptidoglycan transglycosylase (245 aa).

The helical transmembrane segment at 20–42 threads the bilayer; the sequence is VYAGSVFAGAWLATQLFYLVQIA.

Belongs to the glycosyltransferase 51 family.

The protein localises to the cell inner membrane. The enzyme catalyses [GlcNAc-(1-&gt;4)-Mur2Ac(oyl-L-Ala-gamma-D-Glu-L-Lys-D-Ala-D-Ala)](n)-di-trans,octa-cis-undecaprenyl diphosphate + beta-D-GlcNAc-(1-&gt;4)-Mur2Ac(oyl-L-Ala-gamma-D-Glu-L-Lys-D-Ala-D-Ala)-di-trans,octa-cis-undecaprenyl diphosphate = [GlcNAc-(1-&gt;4)-Mur2Ac(oyl-L-Ala-gamma-D-Glu-L-Lys-D-Ala-D-Ala)](n+1)-di-trans,octa-cis-undecaprenyl diphosphate + di-trans,octa-cis-undecaprenyl diphosphate + H(+). Its pathway is cell wall biogenesis; peptidoglycan biosynthesis. Peptidoglycan polymerase that catalyzes glycan chain elongation from lipid-linked precursors. This chain is Biosynthetic peptidoglycan transglycosylase, found in Burkholderia ambifaria (strain ATCC BAA-244 / DSM 16087 / CCUG 44356 / LMG 19182 / AMMD) (Burkholderia cepacia (strain AMMD)).